The primary structure comprises 23 residues: Phallacidin proprotein (23 aa).

Residue Pro1 is a propeptide. A cross-link (cyclopeptide (Ala-Pro)) is located at residues Ala2–Pro8. The 2'-cysteinyl-6'-hydroxytryptophan sulfoxide (Trp-Cys) cross-link spans Trp3–Cys7. The propeptide occupies Cys9–Lys23.

This sequence belongs to the MSDIN fungal toxin family. In terms of processing, processed by the macrocyclase-peptidase enzyme POPB to yield a toxic cyclic heptapeptide. POPB first removes 10 residues from the N-terminus. Conformational trapping of the remaining peptide forces the enzyme to release this intermediate rather than proceed to macrocyclization. The enzyme rebinds the remaining peptide in a different conformation and catalyzes macrocyclization of the N-terminal 7 residues.

In terms of biological role, major toxin that belongs to the bicyclic heptapeptides called phallotoxins. Although structurally related to amatoxins, phallotoxins have a different mode of action, which is the stabilization of F-actin. Phallotoxins are poisonous when administered parenterally, but not orally because of poor absorption. The polypeptide is Phallacidin proprotein (Amanita fuligineoides).